A 295-amino-acid polypeptide reads, in one-letter code: MTNVTGTERVKRGMAEMQKGGVIMDVINAEQAKIAEEAGAVAVMALERVPADIRAAGGVSRMADPTIVEEVMGAVSIPVMAKCRIGHLVEARVLESLGVDYIDESEVLTPADEVYHLNKRDYTVPFVCGCRDIGEAARRIAEGASMLRTKGEPGTGNIVEAVRHMRQVNAEIRQVASLREDELMTYAKNTGAPYEVLLEIKRLGRLPVVNFAAGGVATPADAALMMQLGADGVFVGSGIFKSENPAKFARAIVEATTHYEDYELIASLSKGLGNAMKGIEISTLLPEQRMQERGW.

Asp25 is a D-ribose 5-phosphate binding site. Lys82 acts as the Schiff-base intermediate with D-ribose 5-phosphate in catalysis. D-ribose 5-phosphate is bound at residue Gly154. A D-glyceraldehyde 3-phosphate-binding site is contributed by Arg166. Residues Gly215 and 236–237 (GS) each bind D-ribose 5-phosphate.

The protein belongs to the PdxS/SNZ family. In terms of assembly, in the presence of PdxT, forms a dodecamer of heterodimers.

The catalysed reaction is aldehydo-D-ribose 5-phosphate + D-glyceraldehyde 3-phosphate + L-glutamine = pyridoxal 5'-phosphate + L-glutamate + phosphate + 3 H2O + H(+). It functions in the pathway cofactor biosynthesis; pyridoxal 5'-phosphate biosynthesis. Its function is as follows. Catalyzes the formation of pyridoxal 5'-phosphate from ribose 5-phosphate (RBP), glyceraldehyde 3-phosphate (G3P) and ammonia. The ammonia is provided by the PdxT subunit. Can also use ribulose 5-phosphate and dihydroxyacetone phosphate as substrates, resulting from enzyme-catalyzed isomerization of RBP and G3P, respectively. This chain is Pyridoxal 5'-phosphate synthase subunit PdxS, found in Bacillus cereus (strain 03BB102).